We begin with the raw amino-acid sequence, 142 residues long: Large ribosomal subunit protein uL13 (142 aa).

The protein belongs to the universal ribosomal protein uL13 family. Part of the 50S ribosomal subunit.

Its function is as follows. This protein is one of the early assembly proteins of the 50S ribosomal subunit, although it is not seen to bind rRNA by itself. It is important during the early stages of 50S assembly. This chain is Large ribosomal subunit protein uL13, found in Photorhabdus laumondii subsp. laumondii (strain DSM 15139 / CIP 105565 / TT01) (Photorhabdus luminescens subsp. laumondii).